A 97-amino-acid polypeptide reads, in one-letter code: Aspartyl/glutamyl-tRNA(Asn/Gln) amidotransferase subunit C (97 aa).

This sequence belongs to the GatC family. Heterotrimer of A, B and C subunits.

The catalysed reaction is L-glutamyl-tRNA(Gln) + L-glutamine + ATP + H2O = L-glutaminyl-tRNA(Gln) + L-glutamate + ADP + phosphate + H(+). The enzyme catalyses L-aspartyl-tRNA(Asn) + L-glutamine + ATP + H2O = L-asparaginyl-tRNA(Asn) + L-glutamate + ADP + phosphate + 2 H(+). Allows the formation of correctly charged Asn-tRNA(Asn) or Gln-tRNA(Gln) through the transamidation of misacylated Asp-tRNA(Asn) or Glu-tRNA(Gln) in organisms which lack either or both of asparaginyl-tRNA or glutaminyl-tRNA synthetases. The reaction takes place in the presence of glutamine and ATP through an activated phospho-Asp-tRNA(Asn) or phospho-Glu-tRNA(Gln). This chain is Aspartyl/glutamyl-tRNA(Asn/Gln) amidotransferase subunit C, found in Prochlorococcus marinus (strain MIT 9215).